Consider the following 165-residue polypeptide: UPF0303 protein Rleg2_2653 (165 aa).

Belongs to the UPF0303 family.

This chain is UPF0303 protein Rleg2_2653, found in Rhizobium leguminosarum bv. trifolii (strain WSM2304).